The following is a 427-amino-acid chain: Gamma-glutamyl phosphate reductase (427 aa).

The protein belongs to the gamma-glutamyl phosphate reductase family.

It localises to the cytoplasm. The enzyme catalyses L-glutamate 5-semialdehyde + phosphate + NADP(+) = L-glutamyl 5-phosphate + NADPH + H(+). The protein operates within amino-acid biosynthesis; L-proline biosynthesis; L-glutamate 5-semialdehyde from L-glutamate: step 2/2. In terms of biological role, catalyzes the NADPH-dependent reduction of L-glutamate 5-phosphate into L-glutamate 5-semialdehyde and phosphate. The product spontaneously undergoes cyclization to form 1-pyrroline-5-carboxylate. This Streptomyces griseus subsp. griseus (strain JCM 4626 / CBS 651.72 / NBRC 13350 / KCC S-0626 / ISP 5235) protein is Gamma-glutamyl phosphate reductase.